The following is a 462-amino-acid chain: MPSCTASTMPGMICKNPDLEFDSLQPCFYPDEDDFYFGGPDSTPPGEDIWKKFELLPTPPLSPSRAFPEHSPEPSNWATEMLLPEADLWGNPAEEDAFGLGGLGGLTPNPVILQDCMWSGFSAREKLERAVNEKLQHGHGPPGVSSACSAPGVGASSPGGRALGGSSSASHTGATLPTDLSHPAAECVDPAVVFPFPVNKRESASVPAAPTSAPATSAAVTSVSVPATAPVAAPARAGGRPASSGEAKALSTSGEDTLSDSDDEDDEEEDEEEEIDVVTVEKRRSSSNNKAVTTFTITVRPKTSALGLGRAQPGELILKRCVPIHQQHNYAAPSPYVESEDAPPQKKIKSEASPRPLKSVVPAKAKSLSPRNSDSEDSERRRNHNILERQRRNDLRSSFLTLRDHVPELVKNEKAAKVVILKKATEYVHALQANEHQLLLEKEKLQARQQQLLKKIEHARTC.

The interval leucine 19–glutamate 47 is interaction with AURKA. The interaction with AURKA and FBXW7 stretch occupies residues leucine 61 to glycine 90. The short motif at asparagine 76–glutamate 85 is the 9aaTAD element. Disordered regions lie at residues lysine 134–proline 177, alanine 232–asparagine 289, and alanine 332–glutamine 390. Low complexity-rich tracts occupy residues glycine 143–leucine 176 and alanine 232–serine 244. The span at threonine 257–aspartate 276 shows a compositional bias: acidic residues. A phosphoserine; by CK2 mark is found at serine 259 and serine 261. Positions glutamate 379–leucine 431 constitute a bHLH domain. Positions leucine 431 to leucine 452 are leucine-zipper.

As to quaternary structure, efficient DNA binding requires dimerization with another bHLH protein. Binds DNA as a heterodimer with MAX. Interacts with KDM5A, KDM5B and HUWE1. Interacts with MYCNOS. Interacts with AURKA; interaction is phospho-independent and triggers AURKA activation; AURKA competes with FBXW7 for binding to unphosphorylated MYCN but not for binding to unphosphorylated MYCN. Interacts with FBXW7; FBXW7 competes with AURKA for binding to unphosphorylated MYCN but not for binding to phosphorylated MYCN. In terms of processing, phosphorylated by GSK3-beta which may promote its degradation. Phosphorylated by AURKA.

It localises to the nucleus. Its function is as follows. Positively regulates the transcription of MYCNOS in neuroblastoma cells. The chain is N-myc proto-oncogene protein (Mycn) from Mus musculus (Mouse).